Reading from the N-terminus, the 251-residue chain is Probable transcriptional regulatory protein Swol_1435 (251 aa).

The disordered stretch occupies residues 1–23 (MAGHSKWANIKHKKARSDEKRGK).

Belongs to the TACO1 family.

Its subcellular location is the cytoplasm. The protein is Probable transcriptional regulatory protein Swol_1435 of Syntrophomonas wolfei subsp. wolfei (strain DSM 2245B / Goettingen).